A 109-amino-acid chain; its full sequence is Nucleoid-associated protein CGSHiEE_00780 (109 aa).

This sequence belongs to the YbaB/EbfC family. As to quaternary structure, homodimer.

It is found in the cytoplasm. The protein resides in the nucleoid. Functionally, binds to DNA and alters its conformation. May be involved in regulation of gene expression, nucleoid organization and DNA protection. This is Nucleoid-associated protein CGSHiEE_00780 from Haemophilus influenzae (strain PittEE).